A 214-amino-acid polypeptide reads, in one-letter code: MMAPGWWKFVTPPAALGAALFPWSRPLSFLCLGTAAFLAFFFRNPPREPPSDPSLAVSPADGRLLGYVMEAGEASDDELSSYLDDPITVSVFMSPLDVHVNRAPLDGRVVEAEILKGRFRPAFRKDSATENNRAVLLFDGDPPFVVRLVSGAVARRIDLYVQEGDEVNKGEPIGMIRFGSRVDLAVPRSSVEELLVRKGDSVKAGETPVIRVKR.

Residue Ser180 is the Schiff-base intermediate with substrate; via pyruvic acid of the active site. At Ser180 the chain carries Pyruvic acid (Ser); by autocatalysis.

It belongs to the phosphatidylserine decarboxylase family. PSD-A subfamily. In terms of assembly, heterodimer of a large membrane-associated beta subunit and a small pyruvoyl-containing alpha subunit. Pyruvate serves as cofactor. Is synthesized initially as an inactive proenzyme. Formation of the active enzyme involves a self-maturation process in which the active site pyruvoyl group is generated from an internal serine residue via an autocatalytic post-translational modification. Two non-identical subunits are generated from the proenzyme in this reaction, and the pyruvate is formed at the N-terminus of the alpha chain, which is derived from the carboxyl end of the proenzyme. The post-translation cleavage follows an unusual pathway, termed non-hydrolytic serinolysis, in which the side chain hydroxyl group of the serine supplies its oxygen atom to form the C-terminus of the beta chain, while the remainder of the serine residue undergoes an oxidative deamination to produce ammonia and the pyruvoyl prosthetic group on the alpha chain.

The protein resides in the cell membrane. The catalysed reaction is archaetidylserine + H(+) = archaetidylethanolamine + CO2. Catalyzes the formation of archaetidylethanolamine (PtdEtn) from archaetidylserine (PtdSer). The polypeptide is Putative archaetidylserine decarboxylase proenzyme (Methanopyrus kandleri (strain AV19 / DSM 6324 / JCM 9639 / NBRC 100938)).